The sequence spans 1046 residues: Translation initiation factor IF-2 (1046 aa).

The disordered stretch occupies residues A49 to Q450. 2 stretches are compositionally biased toward low complexity: residues K57–A80 and P89–A106. Residues A107–A128 are compositionally biased toward pro residues. Residues A129 to G169 are compositionally biased toward low complexity. Residues R177–G194 show a composition bias toward basic and acidic residues. Residues A195–P214 show a composition bias toward low complexity. Composition is skewed to gly residues over residues P239–G248 and G266–G280. A compositionally biased stretch (low complexity) spans G302–P318. The span at R319–G414 shows a compositional bias: gly residues. A compositionally biased stretch (basic residues) spans R418–R427. One can recognise a tr-type G domain in the interval A539–D711. The segment at G548–T555 is G1. Position 548-555 (G548–T555) interacts with GTP. The tract at residues G573–H577 is G2. The segment at D598–G601 is G3. Residues D598 to H602 and N652 to D655 each bind GTP. The G4 stretch occupies residues N652–D655. Residues S688–K690 are G5.

This sequence belongs to the TRAFAC class translation factor GTPase superfamily. Classic translation factor GTPase family. IF-2 subfamily.

The protein resides in the cytoplasm. Its function is as follows. One of the essential components for the initiation of protein synthesis. Protects formylmethionyl-tRNA from spontaneous hydrolysis and promotes its binding to the 30S ribosomal subunits. Also involved in the hydrolysis of GTP during the formation of the 70S ribosomal complex. This is Translation initiation factor IF-2 from Streptomyces avermitilis (strain ATCC 31267 / DSM 46492 / JCM 5070 / NBRC 14893 / NCIMB 12804 / NRRL 8165 / MA-4680).